The chain runs to 314 residues: Olfactory receptor 9I1 (314 aa).

The Extracellular segment spans residues 1–25 (MAKNNLTRVTEFILMGFMDHPKLEI). The N-linked (GlcNAc...) asparagine glycan is linked to Asn-5. The helical transmembrane segment at 26 to 46 (PLFLVFLSFYLVTLLGNVGMI) threads the bilayer. Residues 47–54 (MLIQVDVK) are Cytoplasmic-facing. Residues 55-75 (LYTPMYFFLSHLSLLDACYTS) traverse the membrane as a helical segment. Over 76 to 99 (VITPQILATLATGKTVISYGHCAA) the chain is Extracellular. The cysteines at positions 97 and 189 are disulfide-linked. A helical transmembrane segment spans residues 100-120 (QFFLFTICAGTECFLLAVMAY). At 121 to 139 (DRYAAIRNPLLYTVAMNPR) the chain is on the cytoplasmic side. The helical transmembrane segment at 140–160 (LCWSLVVGAYVCGVSGAILRT) threads the bilayer. Residues 161–197 (TCTFTLSFCKDNQINFFFCDLPPLLKLACSDTANIEI) are Extracellular-facing. Residues 198 to 217 (VIIFFGNFVILANASVILIS) form a helical membrane-spanning segment. Residues 218-237 (YLLIIKTILKVKSSGGRAKT) lie on the Cytoplasmic side of the membrane. The chain crosses the membrane as a helical span at residues 238 to 258 (FSTCASHITAVALFFGALIFM). Topologically, residues 259–271 (YLQSGSGKSLEED) are extracellular. The helical transmembrane segment at 272-292 (KVVSVFYTVVIPMLNPLIYSL) threads the bilayer. The Cytoplasmic segment spans residues 293–314 (RNKDVKDAFRKVARRLQVSLSM).

The protein belongs to the G-protein coupled receptor 1 family.

It localises to the cell membrane. Its function is as follows. Odorant receptor. The chain is Olfactory receptor 9I1 (OR9I1) from Homo sapiens (Human).